The primary structure comprises 521 residues: Probable methylmalonate-semialdehyde/malonate-semialdehyde dehydrogenase [acylating], mitochondrial (521 aa).

NAD(+) contacts are provided by phenylalanine 172, lysine 196, glutamate 199, arginine 200, and serine 249. The Nucleophile role is filled by cysteine 304. Glutamate 404 contacts NAD(+).

This sequence belongs to the aldehyde dehydrogenase family. In terms of assembly, homotetramer.

Its subcellular location is the mitochondrion. It catalyses the reaction 2-methyl-3-oxopropanoate + NAD(+) + CoA + H2O = propanoyl-CoA + hydrogencarbonate + NADH + H(+). The enzyme catalyses 3-oxopropanoate + NAD(+) + CoA + H2O = hydrogencarbonate + acetyl-CoA + NADH + H(+). Probable malonate and methylmalonate semialdehyde dehydrogenase involved in the catabolism of valine, thymine, and compounds catabolized by way of beta-alanine, including uracil and cytidine. The polypeptide is Probable methylmalonate-semialdehyde/malonate-semialdehyde dehydrogenase [acylating], mitochondrial (Aedes aegypti (Yellowfever mosquito)).